The sequence spans 343 residues: Uroporphyrinogen decarboxylase (343 aa).

Substrate-binding positions include 25–29 (RQAGR), aspartate 75, tyrosine 152, serine 207, and histidine 323.

Belongs to the uroporphyrinogen decarboxylase family. As to quaternary structure, homodimer.

It is found in the cytoplasm. It catalyses the reaction uroporphyrinogen III + 4 H(+) = coproporphyrinogen III + 4 CO2. It functions in the pathway porphyrin-containing compound metabolism; protoporphyrin-IX biosynthesis; coproporphyrinogen-III from 5-aminolevulinate: step 4/4. In terms of biological role, catalyzes the decarboxylation of four acetate groups of uroporphyrinogen-III to yield coproporphyrinogen-III. The polypeptide is Uroporphyrinogen decarboxylase (Jannaschia sp. (strain CCS1)).